A 64-amino-acid polypeptide reads, in one-letter code: MSALAIEKSWKDVDLRDGATSHPAGLGFGELTFEDLREDRTIYAASSGWVCTLTIECGTVICAC.

Residues 1–45 (MSALAIEKSWKDVDLRDGATSHPAGLGFGELTFEDLREDRTIYAA) constitute a propeptide that is removed on maturation. The lanthionine (Ser-Cys) cross-link spans 46–51 (SSGWVC). 2 consecutive cross-links (beta-methyllanthionine (Thr-Cys)) follow at residues 52 to 57 (TLTIEC) and 54 to 62 (TIECGTVIC). Residues 59 to 64 (TVICAC) constitute a cross-link (beta-methyllanthionine sulfoxide (Thr-Cys)).

The protein belongs to the type B lantibiotic family. Post-translationally, maturation of lantibiotics involves the enzymatic conversion of Thr, and Ser into dehydrated AA by the enzyme garM and the formation of thioether bonds with cysteine. The 59-64 beta-methyllanthionine thioether bond is oxidized to a sulfoxide by the monooxygenase GarO. This is followed by membrane translocation and cleavage of the modified precursor. In terms of processing, the sulfoxide group of the 59-64 beta-methyllanthionine thioether bond is mildly important for activity, since the antibacterial activity of deoxyactagardine is marginally lower compared with oxidized actagardine.

Functionally, has potent antibacterial activity against some Gram-positive bacteria. Has good antistreptococcal activity. Inhibits cell wall biosynthesis by binding to lipid II and blocking transglycosylation. The protein is Lantibiotic actagardine of Actinoplanes garbadinensis.